A 483-amino-acid chain; its full sequence is Glycogen synthase (483 aa).

Position 15 (lysine 15) interacts with ADP-alpha-D-glucose.

It belongs to the glycosyltransferase 1 family. Bacterial/plant glycogen synthase subfamily.

It catalyses the reaction [(1-&gt;4)-alpha-D-glucosyl](n) + ADP-alpha-D-glucose = [(1-&gt;4)-alpha-D-glucosyl](n+1) + ADP + H(+). It functions in the pathway glycan biosynthesis; glycogen biosynthesis. Synthesizes alpha-1,4-glucan chains using ADP-glucose. The chain is Glycogen synthase from Thioalkalivibrio sulfidiphilus (strain HL-EbGR7).